The sequence spans 431 residues: tRNA(Ile)-lysidine synthase (431 aa).

19–24 contacts ATP; that stretch reads STGIDS.

This sequence belongs to the tRNA(Ile)-lysidine synthase family.

The protein resides in the cytoplasm. The enzyme catalyses cytidine(34) in tRNA(Ile2) + L-lysine + ATP = lysidine(34) in tRNA(Ile2) + AMP + diphosphate + H(+). Ligates lysine onto the cytidine present at position 34 of the AUA codon-specific tRNA(Ile) that contains the anticodon CAU, in an ATP-dependent manner. Cytidine is converted to lysidine, thus changing the amino acid specificity of the tRNA from methionine to isoleucine. The chain is tRNA(Ile)-lysidine synthase from Staphylococcus aureus (strain MW2).